The following is a 131-amino-acid chain: Small ribosomal subunit protein uS11 (131 aa).

The protein belongs to the universal ribosomal protein uS11 family. In terms of assembly, part of the 30S ribosomal subunit. Interacts with proteins S7 and S18. Binds to IF-3.

Its function is as follows. Located on the platform of the 30S subunit, it bridges several disparate RNA helices of the 16S rRNA. Forms part of the Shine-Dalgarno cleft in the 70S ribosome. The sequence is that of Small ribosomal subunit protein uS11 from Natranaerobius thermophilus (strain ATCC BAA-1301 / DSM 18059 / JW/NM-WN-LF).